The primary structure comprises 561 residues: Putative transport protein AHA_2450 (561 aa).

5 helical membrane-spanning segments follow: residues leucine 8–glycine 28, isoleucine 37–phenylalanine 57, phenylalanine 66–leucine 86, isoleucine 90–leucine 110, and asparagine 161–valine 181. RCK C-terminal domains are found at residues serine 206–asparagine 291 and lysine 293–phenylalanine 376. Helical transmembrane passes span leucine 386–phenylalanine 406, leucine 409–leucine 429, leucine 450–histidine 470, alanine 476–phenylalanine 496, and threonine 541–phenylalanine 561.

The protein belongs to the AAE transporter (TC 2.A.81) family. YbjL subfamily.

The protein resides in the cell membrane. This Aeromonas hydrophila subsp. hydrophila (strain ATCC 7966 / DSM 30187 / BCRC 13018 / CCUG 14551 / JCM 1027 / KCTC 2358 / NCIMB 9240 / NCTC 8049) protein is Putative transport protein AHA_2450.